We begin with the raw amino-acid sequence, 562 residues long: Probable Xaa-Pro aminopeptidase PEPP (562 aa).

Residues D358, D369, E492, and E532 each contribute to the Mn(2+) site.

The protein belongs to the peptidase M24B family. It depends on Mn(2+) as a cofactor.

It catalyses the reaction Release of any N-terminal amino acid, including proline, that is linked to proline, even from a dipeptide or tripeptide.. Catalyzes the removal of a penultimate prolyl residue from the N-termini of peptides. This is Probable Xaa-Pro aminopeptidase PEPP (PEPP) from Leptosphaeria maculans (strain JN3 / isolate v23.1.3 / race Av1-4-5-6-7-8) (Blackleg fungus).